A 146-amino-acid chain; its full sequence is MKISFFNFPDDLLYEPERHVWIKVEENKVVSVGMTDLGQYLAGKIFQVSVPRRVGERVNNRTILFSVESAKWIGKIRLQIEGEVVDINERVIKNPSIINEDPYGSWIIKVSVTDVDLVKRAFKNIQDCRSQFEEEANRIVSWKNSS.

Residues 29 to 111 (VVSVGMTDLG…PYGSWIIKVS (83 aa)) enclose the Lipoyl-binding domain. Lysine 71 is modified (N6-lipoyllysine).

The protein belongs to the GcvH family. The glycine cleavage system is composed of four proteins: P, T, L and H. The cofactor is (R)-lipoate.

In terms of biological role, the glycine cleavage system catalyzes the degradation of glycine. The H protein shuttles the methylamine group of glycine from the P protein to the T protein. In Sulfolobus acidocaldarius (strain ATCC 33909 / DSM 639 / JCM 8929 / NBRC 15157 / NCIMB 11770), this protein is Probable glycine cleavage system H protein 3.